We begin with the raw amino-acid sequence, 354 residues long: UPF0425 pyridoxal phosphate-dependent protein MMP0002 (354 aa).

Residue Lys210 is modified to N6-(pyridoxal phosphate)lysine.

Belongs to the UPF0425 family. Pyridoxal 5'-phosphate is required as a cofactor.

This chain is UPF0425 pyridoxal phosphate-dependent protein MMP0002, found in Methanococcus maripaludis (strain DSM 14266 / JCM 13030 / NBRC 101832 / S2 / LL).